Reading from the N-terminus, the 481-residue chain is uncharacterized protein (481 aa).

Transmembrane regions (helical) follow at residues 3–23, 33–53, 75–95, 99–119, 122–142, 155–175, 196–216, 241–261, 264–284, 303–323, 351–371, 400–420, and 443–463; these read YLPM…LLHG, FITA…YYYF, QAII…GMGE, NNMF…IVLA, IFNL…LVFL, YMIM…FLLA, IYGG…LPPF, FVLV…DYFA, HAVL…MALL, VATG…FHAI, GGLL…KLAI, IIMI…FYLI, and VFSL…PDIV.

Its subcellular location is the cell membrane. This is an uncharacterized protein from Methanocaldococcus jannaschii (strain ATCC 43067 / DSM 2661 / JAL-1 / JCM 10045 / NBRC 100440) (Methanococcus jannaschii).